The following is a 1044-amino-acid chain: MMAQKSQGSDNLQEGQEKSKREILKCTKSAWAPLDEWLPPDPEEESQSLTIPMLEDSKQESIQQWLDSGFFVSANENFQQVIDRTVSLYEQGMVQMTVKDYMRSLHQFSETPILSRGTSFNSCYSTASVPQSIPEWLEFWEIDPVEILLDLGFGADEPDICMQIPARFLGCGSAARGINIRVFLEAQKQRMDIENPNLYGRFRQLEILDHVTNAFSSLLSDVSILPNRAEEKAGGESVQRTSVSAAKEHRRRMGKLLRRASKQNIRRDCNPEVSESFKVKDEVFVPFTKPWDCGAELAATSINHKQNHLSLSVEHQSLQACDDLLPYPPHGLLSKQWPCSSMPAKQAPPSCVSEGSVKGRTQKENLFQTNKLKSLSHLAGKGPDSFEMEEVQSFEEETGNPLDMTSGTVGARVDRANSCQSDSSGFLEEPLEPLPLQMPSLPNSQSPAENGGRKPRDQSHSLVSSQDCQLESDGPDSKSRASMSFSSQEANALEQRASVSVMEEEFLLEAMEGPPELYIPDMACAKTTTRGECPRKDSHLWQLLPMPHAEYEVTRPTATSKYDHPLGFMVTHVTEMQDSFVRPEGAGKVQSHHNESQRSPGNDHTQDKFLHVDSEAPREEESSGFCPHTNHSLLVPESSSQCIPKHSEITPYATDLAQTSEKLIPHLHKLPGDPAQVKSRSGTLGQILPGTEAEMENLPLNTGSSRSVMTQMSSSLVSAAQRAVALGTGPRGTSLECTVCDPVTATETRLGTKARQLNDASIQTSALSNKTLTHGPQPLTKSVSLDSGFSSICPMGTCHAIPAHCCICCHHHPHCHGERQSPGPEPSVCRHCLCSLTGHQEAQFMTTLKALQDTTVRELCSCTVHEMEAMKTICQSFREYLEEIEQHLMGQQALFSRDMSEEEREEAEQLQTLREALRQQVAELEFQLGDRAQQIREGILLQLEVLTAEPPEHYSNLHQYNWIEESNGQTSCSKIHPGMAPRTVFPPDDGQEAPCSGGTQLAAFTPPTLENSTRMSPSSSAWAKLGPTPLSNCPVGEKDADVFL.

Polar residues predominate over residues 1–14; the sequence is MMAQKSQGSDNLQE. 4 disordered regions span residues 1 to 20, 230 to 251, 388 to 489, and 583 to 607; these read MMAQKSQGSDNLQEGQEKSK, EEKAGGESVQRTSVSAAKEHRR, MEEV…SSQE, and PEGAGKVQSHHNESQRSPGNDHTQD. Residues 388-398 are compositionally biased toward acidic residues; that stretch reads MEEVQSFEEET. 2 stretches are compositionally biased toward polar residues: residues 460 to 469 and 480 to 489; these read HSLVSSQDCQ and RASMSFSSQE. Residues 896 to 937 are a coiled coil; it reads SRDMSEEEREEAEQLQTLREALRQQVAELEFQLGDRAQQIRE.

In Homo sapiens (Human), this protein is Protein ITPRID1.